The chain runs to 112 residues: MKSKLSILMIGFALSVLLAACGSNDAKEEKTDTGSKTEATASEGEELYQQSCVGCHGKDLEGVSGPNLQEVGGKYDEHKIESIIKNGRGNMPKGLVDDNEAAVIAKWLSEKK.

The N-terminal stretch at 1–20 (MKSKLSILMIGFALSVLLAA) is a signal peptide. Cysteine 21 carries the N-palmitoyl cysteine lipid modification. Cysteine 21 carries the S-diacylglycerol cysteine lipid modification. Basic and acidic residues predominate over residues 25–35 (DAKEEKTDTGS). Residues 25 to 44 (DAKEEKTDTGSKTEATASEG) form a disordered region. The 74-residue stretch at 39–112 (ATASEGEELY…VIAKWLSEKK (74 aa)) folds into the Cytochrome c domain. Positions 52, 55, 56, and 91 each coordinate heme c.

In terms of processing, binds 1 heme c group covalently per subunit.

It is found in the cell membrane. Its function is as follows. Electron carrier protein. This Bacillus subtilis (strain 168) protein is Cytochrome c-551 (cccB).